The primary structure comprises 309 residues: Probable (S)-ureidoglycine aminohydrolase (309 aa).

The signal sequence occupies residues 1-22; sequence MMLPRLLLLVVASALPLASVAA. The Mn(2+) site is built by Glu-245, His-247, His-251, and Gln-285. Glu-245 serves as a coordination point for substrate. The substrate site is built by Gln-285, Tyr-297, and Lys-301.

Belongs to the UGHY family. As to quaternary structure, homooctamer. The cofactor is Mn(2+).

The protein resides in the endoplasmic reticulum. It catalyses the reaction (S)-2-ureidoglycine + H2O = (S)-ureidoglycolate + NH4(+). Its function is as follows. Involved in the catabolism of purine nucleotides. The sequential activity of AAH, UGLYAH and UAH allows a complete purine breakdown without the intermediate generation of urea. This is Probable (S)-ureidoglycine aminohydrolase (UGLYAH) from Oryza sativa subsp. japonica (Rice).